A 2514-amino-acid chain; its full sequence is Highly reducing polyketide synthase sphB (2514 aa).

In terms of domain architecture, Ketosynthase family 3 (KS3) spans 66-486 (QVPIAICGMA…GANAHVILES (421 aa)). Residues Cys-238, His-374, and His-409 each act as for beta-ketoacyl synthase activity in the active site. One can recognise a Malonyl-CoA:ACP transacylase (MAT) domain in the interval 580–904 (MVFTGQGAQW…AIGALHSLNV (325 aa)). An N-terminal hotdog fold region spans residues 950–1079 (HDLLGARVAE…GEVCAQSSAP (130 aa)). The PKS/mFAS DH domain occupies 950 to 1240 (HDLLGARVAE…AADISDTHAA (291 aa)). The active-site Proton acceptor; for dehydratase activity is the His-982. Residues 1089-1240 (PRTLNVRKWY…AADISDTHAA (152 aa)) form a C-terminal hotdog fold region. Catalysis depends on Asp-1150, which acts as the Proton donor; for dehydratase activity. A methyltransferase (CMet) domain region spans residues 1319-1578 (WTGLDHEAIS…EPHQVTTTMV (260 aa)). The region spanning 1779–2092 (GRVNSLHYAR…KGQHIGRVGV (314 aa)) is the Enoyl reductase (ER) domain. In terms of domain architecture, Ketoreductase (KR) spans 2120 to 2297 (ASYLMVGGLG…ASVVDMGAVE (178 aa)). A Carrier domain is found at 2427 to 2504 (EAAKLFAVEI…ILGQYAANEV (78 aa)). Ser-2464 carries the post-translational modification O-(pantetheine 4'-phosphoryl)serine.

Pantetheine 4'-phosphate serves as cofactor.

The catalysed reaction is holo-[ACP] + 8 malonyl-CoA + acetyl-CoA + 5 AH2 + 8 NADPH + 16 H(+) = (3R)-hydroxyoctadeca-4,10-dienoyl-[ACP] + 5 A + 8 CO2 + 8 NADP(+) + 9 CoA + 7 H2O. It participates in secondary metabolite biosynthesis. Its function is as follows. Highly reducing polyketide synthase; part of the gene cluster that mediates the biosynthesis of sphingofungins, bioactive molecules acting as sphingolipid inhibitors via inhibiting serine palmitoyl transferase (SPT). Within the pathway, sphB catalyzes the first step of sphingofungin biosynthesis by condensing 8 units of malonyl-CoA with one starter unit of acetyl-CoA, leading to an C18 polyketide precursor 3-hydroxyoctadeca-4,10-dienoyl-ACP containing one delta-6 desaturation and one delta-12 desaturation. The PKS sphB does not contain any putative thioesterase domain for releasing the nascent polyketide chain and it has been suggested that aminoacyl transferases can facilitate the polyketide chain release. The aminoacyl transferase sphA uses the sphB product to produce 3-keto-presphingofungin by adding an aminomalonate molecule. SphF then reduces the C-3 ketone of 3-keto-presphingofungin which leads to presphingofungin. The cytochrome P450 monooxygenase sphH converts presphingofungin into sphingofungin B1 which is further converted to sphingofungin B by the dioxygenase sphC. SphC is also able to convert presphingofungin into sphingofungin B2. The acetyltransferase sphE acetylates sphingofungin B to produce sphingofungin C, but can also convert sphingofungin B1 into sphingofungin C1 and sphingofungin B2 into sphingofungin C2. Finally, sphingofungin C can be spontaneously converted into sphingofungin D. The chain is Highly reducing polyketide synthase sphB from Aspergillus fumigatus (strain CBS 144.89 / FGSC A1163 / CEA10) (Neosartorya fumigata).